A 428-amino-acid polypeptide reads, in one-letter code: Tyrosine--tRNA ligase (428 aa).

Tyr41 serves as a coordination point for L-tyrosine. A 'HIGH' region motif is present at residues Pro46 to His55. At Lys148 the chain carries N6-acetyllysine. L-tyrosine is bound by residues Tyr179 and Gln183. Residues Lys239–Thr243 carry the 'KMSKS' region motif. Residue Lys242 participates in ATP binding. The S4 RNA-binding domain maps to Ala361–Gly418.

This sequence belongs to the class-I aminoacyl-tRNA synthetase family. TyrS type 1 subfamily. In terms of assembly, homodimer.

The protein localises to the cytoplasm. It carries out the reaction tRNA(Tyr) + L-tyrosine + ATP = L-tyrosyl-tRNA(Tyr) + AMP + diphosphate + H(+). Its function is as follows. Catalyzes the attachment of tyrosine to tRNA(Tyr) in a two-step reaction: tyrosine is first activated by ATP to form Tyr-AMP and then transferred to the acceptor end of tRNA(Tyr). The chain is Tyrosine--tRNA ligase from Escherichia coli O1:K1 / APEC.